Reading from the N-terminus, the 475-residue chain is Ankyrin repeat, SAM and basic leucine zipper domain-containing protein 1 (475 aa).

The segment covering 1-10 (MAAGRLRGLA) has biased composition (low complexity). A disordered region spans residues 1-24 (MAAGRLRGLAVAGGGESSESDDDG). S17, S18, and S20 each carry phosphoserine. ANK repeat units follow at residues 45–74 (EKNE…SVDS), 78–107 (YGWT…NANF), 110–144 (DKQT…DPNV), 148–177 (RLMT…EVNT), 181–210 (SGYT…DKML), and 214–243 (DGNI…PLKG). The region spanning 272–334 (SYTAFGDLEV…KILAALKELD (63 aa)) is the SAM domain.

Interacts with DDX4, PIWIL1, RANBP9 and TDRD1.

It is found in the cytoplasm. Functionally, plays a central role during spermatogenesis by repressing transposable elements and preventing their mobilization, which is essential for the germline integrity. Acts via the piRNA metabolic process, which mediates the repression of transposable elements during meiosis by forming complexes composed of piRNAs and Piwi proteins and governs the methylation and subsequent repression of transposons. Its association with pi-bodies suggests a participation in the primary piRNAs metabolic process. Required prior to the pachytene stage to facilitate the production of multiple types of piRNAs, including those associated with repeats involved in the regulation of retrotransposons. May act by mediating protein-protein interactions during germ cell maturation. The protein is Ankyrin repeat, SAM and basic leucine zipper domain-containing protein 1 (ASZ1) of Carollia perspicillata (Seba's short-tailed bat).